We begin with the raw amino-acid sequence, 184 residues long: TRAF-interacting protein with FHA domain-containing protein A (184 aa).

Thr9 is modified (phosphothreonine). Residues 47–103 (VKFGRNSNMCQYTFQDKQVSRIQFVLQPFKQFNSSVLSFEIKNMSKKTSLMVDNQEL) form the FHA domain. The interval 152–184 (NNWPTQNPIPEDGMYSSYFTHRSSPSEMDENEL) is disordered. Polar residues predominate over residues 168–177 (SYFTHRSSPS).

The protein belongs to the TIFA family. Homooligomer; homooligomerizes following phosphorylation at Thr-9. Interacts with IRAK1, TRAF2 and TRAF6. Interacts with TIFAB; binding to TIFAB inhibits TRAF6 activation, possibly by inducing a conformational change in TIFA. Interacts with ZCCHC11; binding to ZCCHC11 suppresses the TRAF6-dependent activation of NF-kappa-B. In terms of processing, phosphorylated at Thr-9 following detection of ADP-D-glycero-beta-D-manno-heptose (ADP-Heptose) by ALPK1. Phosphorylation at Thr-9 by ALPK1 leads to the formation of an intermolecular binding between the FHA domain and phosphorylated Thr-9, promoting TIFA oligomerization and TIFA-mediated NF-kappa-B activation. Highly expressed in the spleen and at lower levels in heart, brain, lung, liver, kidney and testes.

It is found in the cytoplasm. Its function is as follows. Adapter molecule that plays a key role in the activation of pro-inflammatory NF-kappa-B signaling following detection of bacterial pathogen-associated molecular pattern metabolites (PAMPs). Promotes activation of an innate immune response by inducing the oligomerization and polyubiquitination of TRAF6, which leads to the activation of TAK1 and IKK through a proteasome-independent mechanism. TIFA-dependent innate immune response is triggered by ADP-D-glycero-beta-D-manno-heptose (ADP-Heptose), a potent PAMP present in all Gram-negative and some Gram-positive bacteria: ADP-Heptose is recognized by ALPK1, which phosphorylates TIFA at Thr-9, leading to TIFA homooligomerization and subsequent activation of pro-inflammatory NF-kappa-B signaling. The protein is TRAF-interacting protein with FHA domain-containing protein A of Mus musculus (Mouse).